The primary structure comprises 366 residues: S-adenosylmethionine:tRNA ribosyltransferase-isomerase (366 aa).

This sequence belongs to the QueA family. As to quaternary structure, monomer.

It localises to the cytoplasm. It carries out the reaction 7-aminomethyl-7-carbaguanosine(34) in tRNA + S-adenosyl-L-methionine = epoxyqueuosine(34) in tRNA + adenine + L-methionine + 2 H(+). The protein operates within tRNA modification; tRNA-queuosine biosynthesis. Functionally, transfers and isomerizes the ribose moiety from AdoMet to the 7-aminomethyl group of 7-deazaguanine (preQ1-tRNA) to give epoxyqueuosine (oQ-tRNA). The polypeptide is S-adenosylmethionine:tRNA ribosyltransferase-isomerase (Parasynechococcus marenigrum (strain WH8102)).